A 100-amino-acid chain; its full sequence is Urease subunit gamma (100 aa).

The protein belongs to the urease gamma subunit family. As to quaternary structure, heterotrimer of UreA (gamma), UreB (beta) and UreC (alpha) subunits. Three heterotrimers associate to form the active enzyme.

The protein localises to the cytoplasm. It carries out the reaction urea + 2 H2O + H(+) = hydrogencarbonate + 2 NH4(+). The protein operates within nitrogen metabolism; urea degradation; CO(2) and NH(3) from urea (urease route): step 1/1. This is Urease subunit gamma from Actinobacillus pleuropneumoniae (Haemophilus pleuropneumoniae).